We begin with the raw amino-acid sequence, 388 residues long: Arginine biosynthesis bifunctional protein ArgJ 2 (388 aa).

Residues threonine 145, lysine 167, threonine 178, glutamate 257, and asparagine 381 each contribute to the substrate site. Residue threonine 178 is the Nucleophile of the active site.

It belongs to the ArgJ family. As to quaternary structure, heterotetramer of two alpha and two beta chains.

It is found in the cytoplasm. It catalyses the reaction N(2)-acetyl-L-ornithine + L-glutamate = N-acetyl-L-glutamate + L-ornithine. It carries out the reaction L-glutamate + acetyl-CoA = N-acetyl-L-glutamate + CoA + H(+). Its pathway is amino-acid biosynthesis; L-arginine biosynthesis; L-ornithine and N-acetyl-L-glutamate from L-glutamate and N(2)-acetyl-L-ornithine (cyclic): step 1/1. It participates in amino-acid biosynthesis; L-arginine biosynthesis; N(2)-acetyl-L-ornithine from L-glutamate: step 1/4. Its function is as follows. Catalyzes two activities which are involved in the cyclic version of arginine biosynthesis: the synthesis of N-acetylglutamate from glutamate and acetyl-CoA as the acetyl donor, and of ornithine by transacetylation between N(2)-acetylornithine and glutamate. The protein is Arginine biosynthesis bifunctional protein ArgJ 2 of Clostridium acetobutylicum (strain ATCC 824 / DSM 792 / JCM 1419 / IAM 19013 / LMG 5710 / NBRC 13948 / NRRL B-527 / VKM B-1787 / 2291 / W).